The following is an 814-amino-acid chain: Rho GTPase-activating protein 44 (814 aa).

The 236-residue stretch at 14 to 249 (QTVGRAEKTE…IKAQQEAWVE (236 aa)) folds into the BAR domain. Residues 255–445 (KPLEEHLMIS…PIIQHADWFF (191 aa)) form the Rho-GAP domain. Disordered stretches follow at residues 467–493 (ANYSSMPSPDMDPADRRQPEQARRPLS), 528–769 (RGSS…MSTD), and 784–814 (STLRLSPLEHARRHSATDKRDSEEESESTAL). Positions 479-489 (PADRRQPEQAR) are enriched in basic and acidic residues. The residue at position 493 (serine 493) is a Phosphoserine. 5 stretches are compositionally biased toward low complexity: residues 567–581 (SPATPAPALSPSGAS), 598–612 (SPGSGQKGSPGSIQG), 622–637 (PQPAASPSQLPADQSP), 684–704 (SPYGLSYPPGYSMASGQLSPA), and 741–752 (SVSLSASSPQST). The interval 727 to 814 (KPRQRPTLPP…SEEESESTAL (88 aa)) is interaction with BST2. Positions 790-805 (PLEHARRHSATDKRDS) are enriched in basic and acidic residues. The residue at position 805 (serine 805) is a Phosphoserine. A PDZ-binding motif is present at residues 811 to 814 (STAL).

Interacts with BST2 (via cytoplasmic domain). Interacts (probably via PDZ-binding motif) with SHANK3 (via PDZ domain); the interaction takes place in dendritic spines and promotes GRIA1 exocytosis. As to expression, specifically expressed in brain (at protein level). Detected in olfactory bulb, cortex, hippocampus, diencephalon and cerebellum (at protein level). Expressed in hippocampal neurons (at protein level).

It localises to the cell projection. It is found in the dendritic spine. Its subcellular location is the recycling endosome. The protein localises to the presynapse. The protein resides in the dendrite. In terms of biological role, GTPase-activating protein (GAP) that stimulates the GTPase activity of Rho-type GTPases. Thereby, controls Rho-type GTPases cycling between their active GTP-bound and inactive GDP-bound states. Acts as a GAP at least for CDC42 and RAC1. In neurons, is involved in dendritic spine formation and synaptic plasticity in a specific RAC1-GAP activity. Limits the initiation of exploratory dendritic filopodia. Recruited to actin-patches that seed filopodia, binds specifically to plasma membrane sections that are deformed inward by acto-myosin mediated contractile forces. Acts through GAP activity on RAC1 to reduce actin polymerization necessary for filopodia formation. In association with SHANK3, promotes GRIA1 exocytosis from recycling endosomes and spine morphological changes associated to long-term potentiation. This chain is Rho GTPase-activating protein 44, found in Mus musculus (Mouse).